Here is a 124-residue protein sequence, read N- to C-terminus: Large ribosomal subunit protein uL18 (124 aa).

Belongs to the universal ribosomal protein uL18 family. As to quaternary structure, part of the 50S ribosomal subunit; part of the 5S rRNA/L5/L18/L25 subcomplex. Contacts the 5S and 23S rRNAs.

Functionally, this is one of the proteins that bind and probably mediate the attachment of the 5S RNA into the large ribosomal subunit, where it forms part of the central protuberance. In Frankia casuarinae (strain DSM 45818 / CECT 9043 / HFP020203 / CcI3), this protein is Large ribosomal subunit protein uL18.